Reading from the N-terminus, the 421-residue chain is Acetylglutamate kinase (421 aa).

Residues 1 to 252 (MASAKEISQY…PLESSVSITR (252 aa)) are acetylglutamate kinase. Substrate-binding positions include 59-60 (AG), R81, and N170. The N-acetyltransferase domain occupies 274–420 (ERVIRATTWK…HCTQHPPTLI (147 aa)).

This sequence in the N-terminal section; belongs to the acetylglutamate kinase family. ArgB subfamily.

It localises to the cytoplasm. It carries out the reaction N-acetyl-L-glutamate + ATP = N-acetyl-L-glutamyl 5-phosphate + ADP. It participates in amino-acid biosynthesis; L-arginine biosynthesis; N(2)-acetyl-L-ornithine from L-glutamate: step 2/4. This Xylella fastidiosa (strain Temecula1 / ATCC 700964) protein is Acetylglutamate kinase (argB).